A 310-amino-acid chain; its full sequence is Putative type II methyltransferase M.MJ0563P (310 aa).

Residues M1–L310 form the SAM-dependent MTase C5-type domain. C77 is an active-site residue.

Belongs to the class I-like SAM-binding methyltransferase superfamily. C5-methyltransferase family.

It catalyses the reaction a 2'-deoxycytidine in DNA + S-adenosyl-L-methionine = a 5-methyl-2'-deoxycytidine in DNA + S-adenosyl-L-homocysteine + H(+). Functionally, a putative methylase that may protect DNA from cleavage by an unknown endonuclease. The protein is Putative type II methyltransferase M.MJ0563P of Methanocaldococcus jannaschii (strain ATCC 43067 / DSM 2661 / JAL-1 / JCM 10045 / NBRC 100440) (Methanococcus jannaschii).